Reading from the N-terminus, the 44-residue chain is Metallothionein-4 (44 aa).

It belongs to the metallothionein superfamily. Type 5 family.

In terms of biological role, this protein binds cations of several transition elements. Thought to be involved in metal ion homeostasis. This Drosophila melanogaster (Fruit fly) protein is Metallothionein-4 (MtnD).